A 96-amino-acid chain; its full sequence is MHLKYYLHNLPESLIPWILILIFNDNDNTPLLFIFISSIHVLLYPYSKLTISRYIKENTKLKKEPWYLCKLSALFYLLMAIPVGLPSFIYYTLKRN.

Residues 73-93 (ALFYLLMAIPVGLPSFIYYTL) form a helical membrane-spanning segment.

It localises to the cell membrane. In terms of biological role, this protein is able to protect a cell, which harbors the plasmid ColK encoding colicin K, against colicin K. The polypeptide is Colicin-K immunity protein (cki) (Escherichia coli).